Here is a 59-residue protein sequence, read N- to C-terminus: UPF0434 protein PBPRA2383 (59 aa).

Belongs to the UPF0434 family.

This chain is UPF0434 protein PBPRA2383, found in Photobacterium profundum (strain SS9).